An 87-amino-acid polypeptide reads, in one-letter code: Small ribosomal subunit protein bS20 (87 aa).

The protein belongs to the bacterial ribosomal protein bS20 family.

In terms of biological role, binds directly to 16S ribosomal RNA. The protein is Small ribosomal subunit protein bS20 of Finegoldia magna (strain ATCC 29328 / DSM 20472 / WAL 2508) (Peptostreptococcus magnus).